The primary structure comprises 236 residues: Purine nucleoside phosphorylase DeoD-type (236 aa).

His5 provides a ligand contact to a purine D-ribonucleoside. Phosphate is bound by residues Gly21, Arg25, Arg44, and 88 to 91 (RVGT). A purine D-ribonucleoside contacts are provided by residues 180–182 (EME) and 204–205 (SD). The Proton donor role is filled by Asp205.

It belongs to the PNP/UDP phosphorylase family. Homohexamer; trimer of homodimers.

It catalyses the reaction a purine D-ribonucleoside + phosphate = a purine nucleobase + alpha-D-ribose 1-phosphate. The catalysed reaction is a purine 2'-deoxy-D-ribonucleoside + phosphate = a purine nucleobase + 2-deoxy-alpha-D-ribose 1-phosphate. Its function is as follows. Catalyzes the reversible phosphorolytic breakdown of the N-glycosidic bond in the beta-(deoxy)ribonucleoside molecules, with the formation of the corresponding free purine bases and pentose-1-phosphate. This is Purine nucleoside phosphorylase DeoD-type from Shewanella loihica (strain ATCC BAA-1088 / PV-4).